Consider the following 244-residue polypeptide: Pyridoxine 5'-phosphate synthase (244 aa).

Asparagine 9 is a binding site for 3-amino-2-oxopropyl phosphate. 11 to 12 contacts 1-deoxy-D-xylulose 5-phosphate; the sequence is DH. Position 20 (arginine 20) interacts with 3-amino-2-oxopropyl phosphate. The active-site Proton acceptor is the histidine 45. 1-deoxy-D-xylulose 5-phosphate contacts are provided by arginine 47 and histidine 52. Glutamate 72 functions as the Proton acceptor in the catalytic mechanism. Threonine 102 provides a ligand contact to 1-deoxy-D-xylulose 5-phosphate. Histidine 193 (proton donor) is an active-site residue. 3-amino-2-oxopropyl phosphate is bound by residues glycine 194 and 215–216; that span reads GH.

This sequence belongs to the PNP synthase family. As to quaternary structure, homooctamer; tetramer of dimers.

Its subcellular location is the cytoplasm. It carries out the reaction 3-amino-2-oxopropyl phosphate + 1-deoxy-D-xylulose 5-phosphate = pyridoxine 5'-phosphate + phosphate + 2 H2O + H(+). The protein operates within cofactor biosynthesis; pyridoxine 5'-phosphate biosynthesis; pyridoxine 5'-phosphate from D-erythrose 4-phosphate: step 5/5. Catalyzes the complicated ring closure reaction between the two acyclic compounds 1-deoxy-D-xylulose-5-phosphate (DXP) and 3-amino-2-oxopropyl phosphate (1-amino-acetone-3-phosphate or AAP) to form pyridoxine 5'-phosphate (PNP) and inorganic phosphate. In Blochmanniella pennsylvanica (strain BPEN), this protein is Pyridoxine 5'-phosphate synthase.